We begin with the raw amino-acid sequence, 139 residues long: Nucleoside diphosphate kinase (139 aa).

Residues Lys10, Phe58, Arg86, Thr92, Arg104, and Asn114 each contribute to the ATP site. The active-site Pros-phosphohistidine intermediate is His117.

The protein belongs to the NDK family. Homotetramer. Requires Mg(2+) as cofactor.

It is found in the cytoplasm. It carries out the reaction a 2'-deoxyribonucleoside 5'-diphosphate + ATP = a 2'-deoxyribonucleoside 5'-triphosphate + ADP. It catalyses the reaction a ribonucleoside 5'-diphosphate + ATP = a ribonucleoside 5'-triphosphate + ADP. Its function is as follows. Major role in the synthesis of nucleoside triphosphates other than ATP. The ATP gamma phosphate is transferred to the NDP beta phosphate via a ping-pong mechanism, using a phosphorylated active-site intermediate. This Rhodococcus jostii (strain RHA1) protein is Nucleoside diphosphate kinase.